The primary structure comprises 559 residues: Laccase-7 (559 aa).

The N-terminal stretch at methionine 1 to alanine 28 is a signal peptide. Asparagine 32, asparagine 47, and asparagine 82 each carry an N-linked (GlcNAc...) asparagine glycan. Plastocyanin-like domains are found at residues threonine 36–glycine 152 and glutamate 163–threonine 316. Cu cation-binding residues include histidine 86 and histidine 88. Residues asparagine 112 and asparagine 120 are each glycosylated (N-linked (GlcNAc...) asparagine). Cu cation-binding residues include histidine 131 and histidine 133. Asparagine 151, asparagine 210, asparagine 220, asparagine 257, asparagine 278, asparagine 314, asparagine 363, and asparagine 443 each carry an N-linked (GlcNAc...) asparagine glycan. Positions phenylalanine 396 to threonine 543 constitute a Plastocyanin-like 3 domain. The Cu cation site is built by histidine 461, histidine 464, and histidine 466. A glycan (N-linked (GlcNAc...) asparagine) is linked at asparagine 484. Residues histidine 522, cysteine 523, histidine 524, and histidine 528 each contribute to the Cu cation site. Asparagine 541 carries an N-linked (GlcNAc...) asparagine glycan.

Belongs to the multicopper oxidase family. It depends on Cu cation as a cofactor.

Its subcellular location is the secreted. The protein resides in the extracellular space. The protein localises to the apoplast. The catalysed reaction is 4 hydroquinone + O2 = 4 benzosemiquinone + 2 H2O. Functionally, lignin degradation and detoxification of lignin-derived products. This Oryza sativa subsp. japonica (Rice) protein is Laccase-7 (LAC7).